A 435-amino-acid polypeptide reads, in one-letter code: Trigger factor (435 aa).

The PPIase FKBP-type domain maps to 163–248 (GDFVTFDFKG…IKEIKVKELP (86 aa)).

The protein belongs to the FKBP-type PPIase family. Tig subfamily.

It localises to the cytoplasm. The enzyme catalyses [protein]-peptidylproline (omega=180) = [protein]-peptidylproline (omega=0). Involved in protein export. Acts as a chaperone by maintaining the newly synthesized protein in an open conformation. Functions as a peptidyl-prolyl cis-trans isomerase. The polypeptide is Trigger factor (Citrifermentans bemidjiense (strain ATCC BAA-1014 / DSM 16622 / JCM 12645 / Bem) (Geobacter bemidjiensis)).